Consider the following 326-residue polypeptide: GTP 3',8-cyclase (326 aa).

Residues Lys-4–Asn-227 form the Radical SAM core domain. Arg-13 is a binding site for GTP. Residues Cys-20 and Cys-24 each contribute to the [4Fe-4S] cluster site. Tyr-26 contributes to the S-adenosyl-L-methionine binding site. Cys-27 lines the [4Fe-4S] cluster pocket. Position 63 (Arg-63) interacts with GTP. Residue Gly-67 coordinates S-adenosyl-L-methionine. Thr-94 provides a ligand contact to GTP. Ser-118 is an S-adenosyl-L-methionine binding site. GTP is bound at residue Lys-155. An S-adenosyl-L-methionine-binding site is contributed by Met-189. Residues Cys-253 and Cys-256 each contribute to the [4Fe-4S] cluster site. Residue Arg-258–Arg-260 coordinates GTP. Residue Cys-270 participates in [4Fe-4S] cluster binding.

Belongs to the radical SAM superfamily. MoaA family. As to quaternary structure, monomer and homodimer. [4Fe-4S] cluster is required as a cofactor.

It catalyses the reaction GTP + AH2 + S-adenosyl-L-methionine = (8S)-3',8-cyclo-7,8-dihydroguanosine 5'-triphosphate + 5'-deoxyadenosine + L-methionine + A + H(+). The protein operates within cofactor biosynthesis; molybdopterin biosynthesis. Functionally, catalyzes the cyclization of GTP to (8S)-3',8-cyclo-7,8-dihydroguanosine 5'-triphosphate. The protein is GTP 3',8-cyclase of Syntrophomonas wolfei subsp. wolfei (strain DSM 2245B / Goettingen).